The following is a 402-amino-acid chain: Argininosuccinate synthase (402 aa).

9 to 17 (AYSGGLDTS) serves as a coordination point for ATP. Position 86 (Y86) interacts with L-citrulline. G116 serves as a coordination point for ATP. L-aspartate is bound by residues T118, N122, and D123. N122 is an L-citrulline binding site. The L-citrulline site is built by R126, S174, S183, E259, and Y271.

It belongs to the argininosuccinate synthase family. Type 1 subfamily. As to quaternary structure, homotetramer.

The protein resides in the cytoplasm. It catalyses the reaction L-citrulline + L-aspartate + ATP = 2-(N(omega)-L-arginino)succinate + AMP + diphosphate + H(+). It participates in amino-acid biosynthesis; L-arginine biosynthesis; L-arginine from L-ornithine and carbamoyl phosphate: step 2/3. The sequence is that of Argininosuccinate synthase from Anoxybacillus flavithermus (strain DSM 21510 / WK1).